We begin with the raw amino-acid sequence, 139 residues long: Acidic phospholipase A2 H1E6 (139 aa).

An N-terminal signal peptide occupies residues 1-16 (MRTLWILAVLQVGVEG). 7 cysteine pairs are disulfide-bonded: Cys42/Cys132, Cys44/Cys60, Cys59/Cys111, Cys65/Cys139, Cys66/Cys104, Cys73/Cys97, and Cys91/Cys102. Tyr43, Gly45, and Gly47 together coordinate Ca(2+). The active site involves His63. A Ca(2+)-binding site is contributed by Asp64. The active site involves Asp105.

In terms of assembly, homodimer. Ca(2+) is required as a cofactor. As to expression, expressed by the venom gland.

Its subcellular location is the secreted. The enzyme catalyses a 1,2-diacyl-sn-glycero-3-phosphocholine + H2O = a 1-acyl-sn-glycero-3-phosphocholine + a fatty acid + H(+). Its function is as follows. Snake venom phospholipase A2 (PLA2) that inhibits ADP-induced platelet aggregation. PLA2 catalyzes the calcium-dependent hydrolysis of the 2-acyl groups in 3-sn-phosphoglycerides. This Calloselasma rhodostoma (Malayan pit viper) protein is Acidic phospholipase A2 H1E6.